We begin with the raw amino-acid sequence, 395 residues long: Methylmalonyl-CoA decarboxylase subunit beta (395 aa).

The next 9 membrane-spanning stretches (helical) occupy residues 17–37 (LNMG…LAIA), 43–63 (LLLV…AGMM), 103–123 (GIFP…GPLI), 128–148 (SLLL…GAIA), 180–200 (PHLM…VPII), 230–250 (IIFP…AATL), 278–298 (INII…AEAF), 304–324 (LAIL…GVLL), and 374–394 (GPNV…LSLF).

This sequence belongs to the GcdB/MmdB/OadB family. As to quaternary structure, the methylmalonyl-CoA decarboxylase is composed of four subunits: the carboxyltransferase alpha subunit (MmdA), the tunnel beta subunit (MmdB), the biotin-containing gamma subunit (MmdC) and the delta subunit (MmdD). In terms of processing, the N-terminus is blocked.

The protein resides in the cell membrane. It carries out the reaction (S)-methylmalonyl-CoA + Na(+)(in) + H(+)(out) = propanoyl-CoA + Na(+)(out) + CO2. In terms of biological role, tunnel subunit of the sodium ion pump methylmalonyl-CoA decarboxylase, which converts the chemical energy of a decarboxylation reaction into an electrochemical gradient of Na(+) ions across the cytoplasmic membrane, thereby creating a sodium ion motive force that is used for ATP synthesis. The beta subunit catalyzes the decarboxylation of the carboxybiotin carrier protein and the coupled export of Na(+) ions. The protein is Methylmalonyl-CoA decarboxylase subunit beta of Propionigenium modestum.